The primary structure comprises 126 residues: Holo-[acyl-carrier-protein] synthase (126 aa).

Mg(2+)-binding residues include aspartate 9 and glutamate 58.

It belongs to the P-Pant transferase superfamily. AcpS family. Requires Mg(2+) as cofactor.

Its subcellular location is the cytoplasm. It catalyses the reaction apo-[ACP] + CoA = holo-[ACP] + adenosine 3',5'-bisphosphate + H(+). Functionally, transfers the 4'-phosphopantetheine moiety from coenzyme A to a Ser of acyl-carrier-protein. The sequence is that of Holo-[acyl-carrier-protein] synthase from Shewanella frigidimarina (strain NCIMB 400).